We begin with the raw amino-acid sequence, 198 residues long: MIEFVYPHTHLVAGVDEVGRGPLVGAVVTAAVILDPARPIAGLNDSKKLSEKRRLALCEEIKEKALSWSLGRAEPYEIDELNILHATMLAMQRAVAGLHIAPEYVLIDGNRCPKLPMPSMAVVKGDSRVPEISAASILAKVTRDAEMAALDIVFPQYGFAQHKGYPTAFHLEKLAEYGATEHHRRSFGPVKRALGLAS.

In terms of domain architecture, RNase H type-2 spans 10-198 (HLVAGVDEVG…PVKRALGLAS (189 aa)). A divalent metal cation-binding residues include D16, E17, and D108.

Belongs to the RNase HII family. Mn(2+) is required as a cofactor. Requires Mg(2+) as cofactor.

The protein resides in the cytoplasm. It catalyses the reaction Endonucleolytic cleavage to 5'-phosphomonoester.. Its function is as follows. Endonuclease that specifically degrades the RNA of RNA-DNA hybrids. The protein is Ribonuclease HII of Escherichia coli (strain ATCC 8739 / DSM 1576 / NBRC 3972 / NCIMB 8545 / WDCM 00012 / Crooks).